A 590-amino-acid chain; its full sequence is Putative histone-lysine N-methyltransferase PRDM6 (590 aa).

Residues 25-87 (QLFPHGGGGP…STPASSSTSA (63 aa)) form a disordered region. Residues 29 to 42 (HGGGGPLKGGGAAG) are compositionally biased toward gly residues. The segment covering 71 to 87 (ASLSSASSTPASSSTSA) has biased composition (low complexity). The region spanning 241–360 (REVCLCTSTV…RGTELLVWYN (120 aa)) is the SET domain. Residues 468–490 (WKCGQCFKTFTQRILLQMHVCTQ) form a C2H2-type 1; degenerate zinc finger. C2H2-type zinc fingers lie at residues 496-518 (YQCG…VVTH) and 524-546 (FKCG…IRTH). The C2H2-type 4; degenerate zinc-finger motif lies at 552–574 (FKCERCERSFTQATQLSRHQRMP).

It belongs to the class V-like SAM-binding methyltransferase superfamily. As to quaternary structure, interacts with HDAC1, HDAC2, HDAC3, CBX1 and EP300.

Its subcellular location is the nucleus. The catalysed reaction is L-lysyl(20)-[histone H4] + S-adenosyl-L-methionine = N(6)-methyl-L-lysyl(20)-[histone H4] + S-adenosyl-L-homocysteine + H(+). Its function is as follows. Putative histone methyltransferase that acts as a transcriptional repressor of smooth muscle gene expression. Promotes the transition from differentiated to proliferative smooth muscle by suppressing differentiation and maintaining the proliferative potential of vascular smooth muscle cells. Also plays a role in endothelial cells by inhibiting endothelial cell proliferation, survival and differentiation. It is unclear whether it has histone methyltransferase activity in vivo. According to some authors, it does not act as a histone methyltransferase by itself and represses transcription by recruiting EHMT2/G9a. According to others, it possesses histone methyltransferase activity when associated with other proteins and specifically methylates 'Lys-20' of histone H4 in vitro. 'Lys-20' methylation represents a specific tag for epigenetic transcriptional repression. In Bos taurus (Bovine), this protein is Putative histone-lysine N-methyltransferase PRDM6 (PRDM6).